Consider the following 310-residue polypeptide: UDP-N-acetylenolpyruvoylglucosamine reductase (310 aa).

Positions 23-188 constitute an FAD-binding PCMH-type domain; the sequence is KVGGNAEIFF…LKAVFKVNKG (166 aa). Arg168 is an active-site residue. Ser217 functions as the Proton donor in the catalytic mechanism. Glu287 is an active-site residue.

The protein belongs to the MurB family. FAD serves as cofactor.

The protein localises to the cytoplasm. The enzyme catalyses UDP-N-acetyl-alpha-D-muramate + NADP(+) = UDP-N-acetyl-3-O-(1-carboxyvinyl)-alpha-D-glucosamine + NADPH + H(+). It participates in cell wall biogenesis; peptidoglycan biosynthesis. Functionally, cell wall formation. The chain is UDP-N-acetylenolpyruvoylglucosamine reductase from Rickettsia bellii (strain OSU 85-389).